A 98-amino-acid chain; its full sequence is NADH-ubiquinone oxidoreductase chain 4L (98 aa).

3 consecutive transmembrane segments (helical) span residues 1–21, 29–49, and 58–78; these read MPII…GMLI, SLLC…LMAL, and IVPV…LALL.

This sequence belongs to the complex I subunit 4L family. As to quaternary structure, core subunit of respiratory chain NADH dehydrogenase (Complex I) which is composed of 45 different subunits.

Its subcellular location is the mitochondrion inner membrane. The enzyme catalyses a ubiquinone + NADH + 5 H(+)(in) = a ubiquinol + NAD(+) + 4 H(+)(out). Its function is as follows. Core subunit of the mitochondrial membrane respiratory chain NADH dehydrogenase (Complex I) which catalyzes electron transfer from NADH through the respiratory chain, using ubiquinone as an electron acceptor. Part of the enzyme membrane arm which is embedded in the lipid bilayer and involved in proton translocation. The polypeptide is NADH-ubiquinone oxidoreductase chain 4L (MT-ND4L) (Semnopithecus entellus (Northern plains gray langur)).